The chain runs to 287 residues: MGLDNLKVGLAQMLKGGVIMDVVTPDQAKIAEDAGAVAVMALEKIPSDIRASGGVSRMSDPGLIERVMDSVSIPVMAKVRIGHFAEAQILQSLKVDYIDESEVLSVADSSYHIDKRKFTVPFVCGATNLGEALRRISEGASMIRSKGEAGTGDIAQATKHIRAILSEISALTQAREDELPARARELGAPIDLVRETARLGRLPVVLFTAGGIATPADSSLVMQLGSDGVFVGSGIFKSEDPKAYAAAIVQATAQYDDADLLARVSRNLGQAMPGVSNLDVRFSSRGV.

Residue Asp-21 participates in D-ribose 5-phosphate binding. Residue Lys-78 is the Schiff-base intermediate with D-ribose 5-phosphate of the active site. Gly-150 is a D-ribose 5-phosphate binding site. Residue Arg-162 participates in D-glyceraldehyde 3-phosphate binding. D-ribose 5-phosphate-binding positions include Gly-211 and 232-233; that span reads GS.

The protein belongs to the PdxS/SNZ family. In the presence of PdxT, forms a dodecamer of heterodimers.

The catalysed reaction is aldehydo-D-ribose 5-phosphate + D-glyceraldehyde 3-phosphate + L-glutamine = pyridoxal 5'-phosphate + L-glutamate + phosphate + 3 H2O + H(+). It functions in the pathway cofactor biosynthesis; pyridoxal 5'-phosphate biosynthesis. Catalyzes the formation of pyridoxal 5'-phosphate from ribose 5-phosphate (RBP), glyceraldehyde 3-phosphate (G3P) and ammonia. The ammonia is provided by the PdxT subunit. Can also use ribulose 5-phosphate and dihydroxyacetone phosphate as substrates, resulting from enzyme-catalyzed isomerization of RBP and G3P, respectively. The chain is Pyridoxal 5'-phosphate synthase subunit PdxS from Tropheryma whipplei (strain TW08/27) (Whipple's bacillus).